Reading from the N-terminus, the 257-residue chain is uncharacterized protein (257 aa).

Ser127 bears the Phosphoserine mark. Disordered regions lie at residues 146–174 and 210–231; these read HEDP…EDDG and AREK…RREK. Residues 151-160 are compositionally biased toward polar residues; that stretch reads PSSTYNSSIS. Residues 196–257 are a coiled coil; it reads HVRMVREVHE…QQQQEDEQKT (62 aa).

This is an uncharacterized protein from Arabidopsis thaliana (Mouse-ear cress).